We begin with the raw amino-acid sequence, 136 residues long: HetP-like commitment protein Alr2902 (136 aa).

A compositionally biased stretch (polar residues) spans 94–109; the sequence is KASTQDLNQSNNSDYL. The interval 94 to 120 is disordered; it reads KASTQDLNQSNNSDYLTTPEPDKRGNI.

The protein belongs to the HetP family. In bacterial two-hybrid assays interacts robustly with HetR and Alr3234 and weakly with itself, HetP and Asl1930.

In terms of biological role, delays heterocyst differentiation and commitment when nitrogen is limiting. Interplay between the 4 HetP paralogs controls the timing of commitment to heterocyst formation and its duration. Epistatic analysis show that the 3 paralogs act upstream of hetP to delay commitment (asl1930, alr3234) or inhibit development (alr2902). Asl1930 and Alr3234 must also attenuate the activity of Alr2902. When only this homolog is present no heterocysts are formed, showing it inhibits development. Ectopic expression partially complements a hetP deletion. The protein is HetP-like commitment protein Alr2902 of Nostoc sp. (strain PCC 7120 / SAG 25.82 / UTEX 2576).